Reading from the N-terminus, the 161-residue chain is RNA pyrophosphohydrolase (161 aa).

The region spanning 12-154 (PYRPGVGMMI…KRKLYQAVVK (143 aa)) is the Nudix hydrolase domain. Residues 46 to 67 (GGIVPGETPSIAAMREMLEEIG) carry the Nudix box motif.

The protein belongs to the Nudix hydrolase family. RppH subfamily. Requires a divalent metal cation as cofactor.

Its function is as follows. Accelerates the degradation of transcripts by removing pyrophosphate from the 5'-end of triphosphorylated RNA, leading to a more labile monophosphorylated state that can stimulate subsequent ribonuclease cleavage. This chain is RNA pyrophosphohydrolase, found in Rickettsia typhi (strain ATCC VR-144 / Wilmington).